Here is a 468-residue protein sequence, read N- to C-terminus: ATP synthase subunit beta (468 aa).

An ATP-binding site is contributed by 148–155 (GGAGVGKT).

It belongs to the ATPase alpha/beta chains family. As to quaternary structure, F-type ATPases have 2 components, CF(1) - the catalytic core - and CF(0) - the membrane proton channel. CF(1) has five subunits: alpha(3), beta(3), gamma(1), delta(1), epsilon(1). CF(0) has three main subunits: a(1), b(2) and c(9-12). The alpha and beta chains form an alternating ring which encloses part of the gamma chain. CF(1) is attached to CF(0) by a central stalk formed by the gamma and epsilon chains, while a peripheral stalk is formed by the delta and b chains.

It is found in the cell inner membrane. It carries out the reaction ATP + H2O + 4 H(+)(in) = ADP + phosphate + 5 H(+)(out). Produces ATP from ADP in the presence of a proton gradient across the membrane. The catalytic sites are hosted primarily by the beta subunits. In Xanthomonas euvesicatoria pv. vesicatoria (strain 85-10) (Xanthomonas campestris pv. vesicatoria), this protein is ATP synthase subunit beta.